The sequence spans 776 residues: Venom dipeptidyl peptidase 4 (776 aa).

The signal sequence occupies residues 1–19 (MVPLRSFVLLNGLFFVLLA). Asn44, Asn66, and Asn329 each carry an N-linked (GlcNAc...) asparagine glycan. 2 disulfides stabilise this stretch: Cys449-Cys452 and Cys462-Cys480. N-linked (GlcNAc...) asparagine glycans are attached at residues Asn504 and Asn577. Residue Ser638 is the Charge relay system of the active site. Residues Cys658 and Cys769 are joined by a disulfide bond. The N-linked (GlcNAc...) asparagine glycan is linked to Asn693. Active-site charge relay system residues include Asp717 and His749.

This sequence belongs to the peptidase S9B family. DPPIV subfamily. In terms of tissue distribution, expressed by the venom gland.

It localises to the secreted. It carries out the reaction Release of an N-terminal dipeptide, Xaa-Yaa-|-Zaa-, from a polypeptide, preferentially when Yaa is Pro, provided Zaa is neither Pro nor hydroxyproline.. Functionally, venom dipeptidyl-peptidase which removes N-terminal dipeptides sequentially from polypeptides having unsubstituted N-termini provided that the penultimate residue is proline. May process venom proteins into their active forms and/or modulate the chemotactic activity of immune cells after the insect sting. The protein is Venom dipeptidyl peptidase 4 of Vespa velutina (Asian yellow-legged hornet).